Here is a 408-residue protein sequence, read N- to C-terminus: NADH-quinone oxidoreductase subunit D (408 aa).

It belongs to the complex I 49 kDa subunit family. NDH-1 is composed of 14 different subunits. Subunits NuoB, C, D, E, F, and G constitute the peripheral sector of the complex.

It is found in the cell inner membrane. The enzyme catalyses a quinone + NADH + 5 H(+)(in) = a quinol + NAD(+) + 4 H(+)(out). Its function is as follows. NDH-1 shuttles electrons from NADH, via FMN and iron-sulfur (Fe-S) centers, to quinones in the respiratory chain. The immediate electron acceptor for the enzyme in this species is believed to be ubiquinone. Couples the redox reaction to proton translocation (for every two electrons transferred, four hydrogen ions are translocated across the cytoplasmic membrane), and thus conserves the redox energy in a proton gradient. The protein is NADH-quinone oxidoreductase subunit D of Campylobacter jejuni subsp. doylei (strain ATCC BAA-1458 / RM4099 / 269.97).